Consider the following 495-residue polypeptide: Ectonucleoside triphosphate diphosphohydrolase 8 (495 aa).

The Cytoplasmic segment spans residues 1 to 8; the sequence is MGLSRKEQ. The chain crosses the membrane as a helical span at residues 9-29; sequence VFLALLGASGVSGLTALILLL. The Extracellular portion of the chain corresponds to 30–471; it reads VEATSVLLPT…AESYGVWVAK (442 aa). N-linked (GlcNAc...) asparagine glycosylation occurs at asparagine 67. A disulfide bridge links cysteine 78 with cysteine 102. Catalysis depends on glutamate 168, which acts as the Proton acceptor. Cysteine 246 and cysteine 292 are joined by a disulfide. N-linked (GlcNAc...) asparagine glycosylation is present at asparagine 304. A disulfide bond links cysteine 329 and cysteine 335. Asparagine 363 carries an N-linked (GlcNAc...) asparagine glycan. The cysteines at positions 381 and 403 are disulfide-linked. A helical transmembrane segment spans residues 472–492; sequence VVFMVLALVAVVGAALVQLFW. Residues 493–495 lie on the Cytoplasmic side of the membrane; sequence LQD.

The protein belongs to the GDA1/CD39 NTPase family. Requires Ca(2+) as cofactor. Mg(2+) serves as cofactor. In terms of processing, N-glycosylated.

The protein resides in the cell membrane. It carries out the reaction a ribonucleoside 5'-triphosphate + 2 H2O = a ribonucleoside 5'-phosphate + 2 phosphate + 2 H(+). Its activity is regulated as follows. Not inhibited by ARL 67156. Its function is as follows. Canalicular ectonucleoside NTPDase responsible for the main hepatic NTPDase activity. Ectonucleoside NTPDases catalyze the hydrolysis of gamma- and beta-phosphate residues of nucleotides, playing a central role in concentration of extracellular nucleotides. Has activity toward ATP, ADP, UTP and UDP, but not toward AMP. The chain is Ectonucleoside triphosphate diphosphohydrolase 8 (ENTPD8) from Homo sapiens (Human).